A 274-amino-acid chain; its full sequence is 4-hydroxy-3-methylbut-2-enyl diphosphate reductase (274 aa).

Position 12 (cysteine 12) interacts with [4Fe-4S] cluster. (2E)-4-hydroxy-3-methylbut-2-enyl diphosphate-binding residues include histidine 36 and histidine 70. Residues histidine 36 and histidine 70 each contribute to the dimethylallyl diphosphate site. Residues histidine 36 and histidine 70 each coordinate isopentenyl diphosphate. Cysteine 92 contacts [4Fe-4S] cluster. Histidine 120 provides a ligand contact to (2E)-4-hydroxy-3-methylbut-2-enyl diphosphate. Histidine 120 serves as a coordination point for dimethylallyl diphosphate. Histidine 120 is an isopentenyl diphosphate binding site. Catalysis depends on glutamate 122, which acts as the Proton donor. Position 158 (threonine 158) interacts with (2E)-4-hydroxy-3-methylbut-2-enyl diphosphate. [4Fe-4S] cluster is bound at residue cysteine 186. Serine 214, serine 215, asparagine 216, and serine 258 together coordinate (2E)-4-hydroxy-3-methylbut-2-enyl diphosphate. The dimethylallyl diphosphate site is built by serine 214, serine 215, asparagine 216, and serine 258. The isopentenyl diphosphate site is built by serine 214, serine 215, asparagine 216, and serine 258.

This sequence belongs to the IspH family. Requires [4Fe-4S] cluster as cofactor.

The catalysed reaction is isopentenyl diphosphate + 2 oxidized [2Fe-2S]-[ferredoxin] + H2O = (2E)-4-hydroxy-3-methylbut-2-enyl diphosphate + 2 reduced [2Fe-2S]-[ferredoxin] + 2 H(+). It catalyses the reaction dimethylallyl diphosphate + 2 oxidized [2Fe-2S]-[ferredoxin] + H2O = (2E)-4-hydroxy-3-methylbut-2-enyl diphosphate + 2 reduced [2Fe-2S]-[ferredoxin] + 2 H(+). It functions in the pathway isoprenoid biosynthesis; dimethylallyl diphosphate biosynthesis; dimethylallyl diphosphate from (2E)-4-hydroxy-3-methylbutenyl diphosphate: step 1/1. It participates in isoprenoid biosynthesis; isopentenyl diphosphate biosynthesis via DXP pathway; isopentenyl diphosphate from 1-deoxy-D-xylulose 5-phosphate: step 6/6. In terms of biological role, catalyzes the conversion of 1-hydroxy-2-methyl-2-(E)-butenyl 4-diphosphate (HMBPP) into a mixture of isopentenyl diphosphate (IPP) and dimethylallyl diphosphate (DMAPP). Acts in the terminal step of the DOXP/MEP pathway for isoprenoid precursor biosynthesis. The sequence is that of 4-hydroxy-3-methylbut-2-enyl diphosphate reductase from Campylobacter curvus (strain 525.92).